Consider the following 391-residue polypeptide: MDKIGVLLMNLGGPERITDVGPFLYNLFSDPEIIRTPFPVFQKPLAWLISTLRSTTSQQAYLSIGGGSPIRRITEQQARELQSKLRDKGLNATTYIAMRYWHPFTESAIADMKADGIDQVVVIPLYPHFSISTSGSSFRELKKLRDADDEFKRVPMRCVRSWFSQSGYLKSMVELISEQISLCELPSKAHIFFTAHGVPKSYVEEAGDPYKQQIEDCSLLIINELEKCLGHTNPHTLSYQSRVGPVEWLKPYTEEVLADLGRSNVNDLIVVPISFVGEHIETLQEIDIEYKEIAEKAGIKNFRRVKALNTHPTFIEGLSDLVISCLEGPQVNLEEASKLPEKVKLYPQEKWQWGWNNSSEVWNGRVAMIIFLVLFIELISGSGPLHKLGIL.

Positions 196 and 281 each coordinate Fe cation.

Belongs to the ferrochelatase family.

Its subcellular location is the cytoplasm. The enzyme catalyses heme b + 2 H(+) = protoporphyrin IX + Fe(2+). The protein operates within porphyrin-containing compound metabolism; protoheme biosynthesis; protoheme from protoporphyrin-IX: step 1/1. Its function is as follows. Catalyzes the ferrous insertion into protoporphyrin IX. This Prochlorococcus marinus (strain AS9601) protein is Ferrochelatase.